Consider the following 1700-residue polypeptide: Probable serine/threonine-protein kinase ifkC (1700 aa).

Residues 1–25 (MPPKPKQKAKQPSQQPPPPPPPAAA) are disordered. Pro residues predominate over residues 14–23 (QQPPPPPPPA). The RWD domain maps to 74–197 (MELEALQAIF…EIAKDFLNEN (124 aa)). The span at 454–463 (GLKKSPSTFE) shows a compositional bias: polar residues. Residues 454–488 (GLKKSPSTFEYSGEGGGGGVGGGSSQKTINPHQQS) form a disordered region. Positions 466–477 (GEGGGGGVGGGS) are enriched in gly residues. Polar residues predominate over residues 479 to 488 (QKTINPHQQS). The Protein kinase domain maps to 494 to 1027 (FEEIQLLGRG…AQQLLQSELM (534 aa)). ATP is bound by residues 500-508 (LGRGGFGQV) and Lys-523. Disordered regions lie at residues 568–639 (LTND…ENND) and 689–760 (GNNT…SSSK). Over residues 572-639 (NSDDDDDDDD…SEFESEENND (68 aa)) the composition is skewed to acidic residues. The span at 697–735 (SSNQHLQQQQQQNQSQQQKKQPQQNQSQQQKKLKNSNSK) shows a compositional bias: low complexity. Positions 736–752 (SKSKSKSKSKSKSKSNS) are enriched in basic residues. The active-site Proton acceptor is Asp-822. Low complexity-rich tracts occupy residues 850–875 (TSTL…SSNS), 1135–1158 (NNSS…NTNS), 1230–1240 (SSNGNSNNNNS), and 1509–1531 (NNSN…SYNN). 4 disordered regions span residues 850 to 901 (TSTL…EVEG), 1134 to 1160 (FNNS…NSVV), 1216 to 1253 (KHHH…SNTT), and 1507 to 1531 (NLNN…SYNN).

The protein belongs to the protein kinase superfamily. Ser/Thr protein kinase family. GCN2 subfamily.

The catalysed reaction is L-seryl-[protein] + ATP = O-phospho-L-seryl-[protein] + ADP + H(+). It catalyses the reaction L-threonyl-[protein] + ATP = O-phospho-L-threonyl-[protein] + ADP + H(+). This is Probable serine/threonine-protein kinase ifkC (ifkC) from Dictyostelium discoideum (Social amoeba).